Here is a 125-residue protein sequence, read N- to C-terminus: Histone H1-like protein Hc1 (125 aa).

Residues 98–125 form a disordered region; it reads TKAKVKPTKKAAPKTKVKTAKKTRSTKK. The segment covering 100–125 has biased composition (basic residues); it reads AKVKPTKKAAPKTKVKTAKKTRSTKK.

It belongs to the histone H1/H5 family. HCT subfamily.

Its function is as follows. Might have a role analogous to that of eukaryotic histone proteins. The sequence is that of Histone H1-like protein Hc1 (hctA) from Chlamydia trachomatis serovar D (strain ATCC VR-885 / DSM 19411 / UW-3/Cx).